The sequence spans 159 residues: Eukaryotic translation initiation factor 5A-2 (159 aa).

Residues 1–10 (MSDDEHHFEA) show a composition bias toward basic and acidic residues. Positions 1 to 25 (MSDDEHHFEASESGASKTYPQSAGN) are disordered. Serine 2 bears the Phosphoserine mark. Residues 13–24 (SGASKTYPQSAG) are compositionally biased toward polar residues. Lysine 51 carries the post-translational modification Hypusine.

This sequence belongs to the eIF-5A family. As to quaternary structure, homodimer. Interacts with AHK4 and AHP1. Cytokinin regulates the formation of the AHP1-AHK4-ELF5A-2 complex. Lys-51 undergoes hypusination, a unique post-translational modification that consists in the addition of a butylamino group from spermidine to lysine side chain, leading to the formation of the unusual amino acid hypusine. eIF-5As are the only known proteins to undergo this modification, which is essential for their function. Ubiquitous. In roots, expressed mostly inside the stele of the mature zone.

It localises to the cytoplasm. Its subcellular location is the nucleus. Functionally, translation factor that promotes translation elongation and termination, particularly upon ribosome stalling at specific amino acid sequence contexts. Binds between the exit (E) and peptidyl (P) site of the ribosome and promotes rescue of stalled ribosome: specifically required for efficient translation of polyproline-containing peptides as well as other motifs that stall the ribosome. Acts as a ribosome quality control (RQC) cofactor by joining the RQC complex to facilitate peptidyl transfer during CAT tailing step. Regulates cytokinin-mediated root protoxylem specification and represses secifically the expression of AHP6. Regulates the induction of programmed cell death caused by infection with virulent pathogen. The protein is Eukaryotic translation initiation factor 5A-2 (ELF5A-2) of Arabidopsis thaliana (Mouse-ear cress).